The chain runs to 215 residues: Hibernation-associated plasma protein HP-27 (215 aa).

A signal peptide spans 1-30 (MYEAGKRASFMGGAGIWILALSVLMHVVCS). The segment at 34-79 (GNPESCNVPGPQGPPGMRGPPGTPGKPGPPGWNGFPGLPGPPGPPG) is disordered. Positions 43-81 (GPQGPPGMRGPPGTPGKPGPPGWNGFPGLPGPPGPPGMT) constitute a Collagen-like domain. Over residues 44–63 (PQGPPGMRGPPGTPGKPGPP) the composition is skewed to pro residues. Residues 85 to 215 (HSKGTSAFAV…VFSGFLIHEN (131 aa)) enclose the C1q domain. The N-linked (GlcNAc...) asparagine glycan is linked to asparagine 155.

In terms of tissue distribution, plasma; synthesized in the liver.

It is found in the secreted. Its function is as follows. Plasma proteins HP-20, HP-25, HP-27 and HP-55 form a 140 kDa complex via disulfide bonds in the plasma and are hibernation specific. The protein is Hibernation-associated plasma protein HP-27 of Tamias sibiricus (Siberian chipmunk).